Here is a 333-residue protein sequence, read N- to C-terminus: Protein translocase subunit SecF (333 aa).

6 helical membrane passes run 27 to 47 (AIVMMIASVILPLVIGLNFGI), 152 to 172 (VWTAVWSLLAATVVIMFYIWV), 180 to 200 (LGAVVALVHDVLLTVGLFAVL), 207 to 227 (TTVAALLTITGYSINDTVVVF), 253 to 275 (TLSRTVMTGMTTLLALVPMLIWG), and 285 to 307 (AMVWGVFTGTYSSVYVAKNIVLF).

Belongs to the SecD/SecF family. SecF subfamily. Forms a complex with SecD. Part of the essential Sec protein translocation apparatus which comprises SecA, SecYEG and auxiliary proteins SecDF-YajC and YidC.

The protein resides in the cell inner membrane. Its function is as follows. Part of the Sec protein translocase complex. Interacts with the SecYEG preprotein conducting channel. SecDF uses the proton motive force (PMF) to complete protein translocation after the ATP-dependent function of SecA. This Rhodobacter capsulatus (strain ATCC BAA-309 / NBRC 16581 / SB1003) protein is Protein translocase subunit SecF.